The following is a 523-amino-acid chain: NAD(P) transhydrogenase subunit alpha (523 aa).

Residues Met1 to Thr411 lie on the Cytoplasmic side of the membrane. NAD(+) contacts are provided by residues Gln127–Asp130, Val177, Asp197–Arg199, and Gly229. The next 2 helical transmembrane spans lie at Val412–Ala432 and Pro433–Trp455. Residues Asn456–Pro464 lie on the Cytoplasmic side of the membrane. A helical transmembrane segment spans residues Leu465 to Gly485. Residues Ser486–Val489 lie on the Periplasmic side of the membrane. The chain crosses the membrane as a helical span at residues Leu490–Phe510. Over Leu511–Ser523 the chain is Cytoplasmic.

This sequence belongs to the AlaDH/PNT family. Heterodimer of an alpha (PntA) and a beta (PntB) chain.

The protein resides in the cell inner membrane. The catalysed reaction is NAD(+) + NADPH + H(+)(in) = NADH + NADP(+) + H(+)(out). The transhydrogenation between NADH and NADP is coupled to respiration and ATP hydrolysis and functions as a proton pump across the membrane. This Cereibacter sphaeroides (Rhodobacter sphaeroides) protein is NAD(P) transhydrogenase subunit alpha.